The sequence spans 150 residues: Aspartate carbamoyltransferase regulatory chain (150 aa).

Positions 105, 110, 133, and 136 each coordinate Zn(2+).

The protein belongs to the PyrI family. In terms of assembly, contains catalytic and regulatory chains. Zn(2+) serves as cofactor.

Functionally, involved in allosteric regulation of aspartate carbamoyltransferase. This is Aspartate carbamoyltransferase regulatory chain from Thermococcus sibiricus (strain DSM 12597 / MM 739).